The sequence spans 776 residues: Venom dipeptidyl peptidase 4 (776 aa).

Positions 1-25 (MVPLRSFVLLNSLFLVLLAARTVVT) are cleaved as a signal peptide. Residues Asn-44, Asn-66, and Asn-329 are each glycosylated (N-linked (GlcNAc...) asparagine). Cystine bridges form between Cys-449-Cys-452 and Cys-462-Cys-480. N-linked (GlcNAc...) asparagine glycosylation is found at Asn-504 and Asn-577. Ser-638 serves as the catalytic Charge relay system. Cys-658 and Cys-769 are joined by a disulfide. Asn-688 and Asn-693 each carry an N-linked (GlcNAc...) asparagine glycan. Catalysis depends on charge relay system residues Asp-717 and His-749.

Belongs to the peptidase S9B family. DPPIV subfamily. In terms of tissue distribution, expressed by the venom gland.

It localises to the secreted. It carries out the reaction Release of an N-terminal dipeptide, Xaa-Yaa-|-Zaa-, from a polypeptide, preferentially when Yaa is Pro, provided Zaa is neither Pro nor hydroxyproline.. With respect to regulation, inhibited by diprotin A. Its function is as follows. Venom dipeptidyl-peptidase which removes N-terminal dipeptides sequentially from polypeptides having unsubstituted N-termini provided that the penultimate residue is proline. May process venom proteins into their active forms and/or modulate the chemotactic activity of immune cells after the insect sting. The sequence is that of Venom dipeptidyl peptidase 4 from Vespula vulgaris (Yellow jacket).